Here is a 356-residue protein sequence, read N- to C-terminus: 1,2-phenylacetyl-CoA epoxidase, subunit E (356 aa).

Positions T2 to Q106 constitute an FAD-binding FR-type domain. Residues Q112–A228 form an oxidoreductase region. Positions Q262–G354 constitute a 2Fe-2S ferredoxin-type domain. Residues C299, C304, C307, and C337 each coordinate [2Fe-2S] cluster.

It in the N-terminal section; belongs to the FAD-binding oxidoreductase type 6 family. [2Fe-2S] cluster is required as a cofactor. Requires FAD as cofactor.

It participates in aromatic compound metabolism; phenylacetate degradation. Component of 1,2-phenylacetyl-CoA epoxidase multicomponent enzyme system which catalyzes the reduction of phenylacetyl-CoA (PA-CoA) to form 1,2-epoxyphenylacetyl-CoA. The subunit E is a reductase with a preference for NADPH and FAD, capable of reducing cytochrome c. This chain is 1,2-phenylacetyl-CoA epoxidase, subunit E (paaE), found in Escherichia coli (strain K12).